The following is a 325-amino-acid chain: Putative S-adenosyl-L-methionine-dependent methyltransferase MT0917 (325 aa).

Residues aspartate 126 and 155–156 (DL) each bind S-adenosyl-L-methionine.

Belongs to the UPF0677 family.

Exhibits S-adenosyl-L-methionine-dependent methyltransferase activity. The chain is Putative S-adenosyl-L-methionine-dependent methyltransferase MT0917 from Mycobacterium tuberculosis (strain CDC 1551 / Oshkosh).